A 206-amino-acid chain; its full sequence is MGERIRGLYLVTPDAADSATLLASVERVLPARPALLQYRNKLADPLRQLDEARSLRQLCSSAGVPLIINDDVALARAVAADGVHLGRDDGSPAAARAVLGADALIGVSCYDEWVRAEDAAAAGADYVAFGAMFPSSTKPGAVRAPLTLLTRARAALDCPVAAIGGITLDNAPALIEAGADLLAVISDVFAAADPLQRALAYSALFA.

4-amino-2-methyl-5-(diphosphooxymethyl)pyrimidine-binding positions include 37–41 and Asn-69; that span reads QYRNK. 2 residues coordinate Mg(2+): Asp-70 and Asp-89. Ser-108 lines the 4-amino-2-methyl-5-(diphosphooxymethyl)pyrimidine pocket. 135-137 serves as a coordination point for 2-[(2R,5Z)-2-carboxy-4-methylthiazol-5(2H)-ylidene]ethyl phosphate; that stretch reads SST. Residue Lys-138 coordinates 4-amino-2-methyl-5-(diphosphooxymethyl)pyrimidine. Residues Gly-165 and 185–186 contribute to the 2-[(2R,5Z)-2-carboxy-4-methylthiazol-5(2H)-ylidene]ethyl phosphate site; that span reads IS.

This sequence belongs to the thiamine-phosphate synthase family. Requires Mg(2+) as cofactor.

It catalyses the reaction 2-[(2R,5Z)-2-carboxy-4-methylthiazol-5(2H)-ylidene]ethyl phosphate + 4-amino-2-methyl-5-(diphosphooxymethyl)pyrimidine + 2 H(+) = thiamine phosphate + CO2 + diphosphate. The enzyme catalyses 2-(2-carboxy-4-methylthiazol-5-yl)ethyl phosphate + 4-amino-2-methyl-5-(diphosphooxymethyl)pyrimidine + 2 H(+) = thiamine phosphate + CO2 + diphosphate. It carries out the reaction 4-methyl-5-(2-phosphooxyethyl)-thiazole + 4-amino-2-methyl-5-(diphosphooxymethyl)pyrimidine + H(+) = thiamine phosphate + diphosphate. It participates in cofactor biosynthesis; thiamine diphosphate biosynthesis; thiamine phosphate from 4-amino-2-methyl-5-diphosphomethylpyrimidine and 4-methyl-5-(2-phosphoethyl)-thiazole: step 1/1. Condenses 4-methyl-5-(beta-hydroxyethyl)thiazole monophosphate (THZ-P) and 2-methyl-4-amino-5-hydroxymethyl pyrimidine pyrophosphate (HMP-PP) to form thiamine monophosphate (TMP). This Azoarcus sp. (strain BH72) protein is Thiamine-phosphate synthase.